Consider the following 144-residue polypeptide: Large ribosomal subunit protein uL11 (144 aa).

The protein belongs to the universal ribosomal protein uL11 family. As to quaternary structure, part of the ribosomal stalk of the 50S ribosomal subunit. Interacts with L10 and the large rRNA to form the base of the stalk. L10 forms an elongated spine to which L12 dimers bind in a sequential fashion forming a multimeric L10(L12)X complex. Post-translationally, one or more lysine residues are methylated.

Functionally, forms part of the ribosomal stalk which helps the ribosome interact with GTP-bound translation factors. This is Large ribosomal subunit protein uL11 from Rhodococcus opacus (strain B4).